A 334-amino-acid polypeptide reads, in one-letter code: Ornithine carbamoyltransferase (334 aa).

Carbamoyl phosphate-binding positions include 57–60 (STRT), Q84, R108, and 135–138 (HPTQ). Residues N169, D233, and 237 to 238 (SM) contribute to the L-ornithine site. Residues 275-276 (CL) and R320 contribute to the carbamoyl phosphate site.

It belongs to the aspartate/ornithine carbamoyltransferase superfamily. OTCase family.

The protein localises to the cytoplasm. The enzyme catalyses carbamoyl phosphate + L-ornithine = L-citrulline + phosphate + H(+). The protein operates within amino-acid biosynthesis; L-arginine biosynthesis; L-arginine from L-ornithine and carbamoyl phosphate: step 1/3. In terms of biological role, reversibly catalyzes the transfer of the carbamoyl group from carbamoyl phosphate (CP) to the N(epsilon) atom of ornithine (ORN) to produce L-citrulline. This Vibrio vulnificus (strain YJ016) protein is Ornithine carbamoyltransferase.